Here is a 357-residue protein sequence, read N- to C-terminus: THUMP domain-containing protein 1 (357 aa).

Over residues 1–10 (MAARIQQSPQ) the composition is skewed to polar residues. Disordered stretches follow at residues 1 to 38 (MAAR…GPRQ) and 74 to 95 (GPEK…DDDV). Position 2 is an N-acetylalanine (Ala2). Ser8, Ser86, Ser88, and Ser119 each carry phosphoserine. The THUMP domain maps to 147-254 (DIYKTKKKKT…KAVCCLSVVK (108 aa)). Ser270 carries the post-translational modification Phosphoserine. 2 stretches are compositionally biased toward polar residues: residues 276-287 (QLNPKQAAQTGN) and 298-315 (KSSQ…QVVP). Residues 276–357 (QLNPKQAAQT…EGSESNENDL (82 aa)) are disordered.

The protein belongs to the THUMPD1 family. Interacts with NAT10. Binds tRNA.

Functionally, functions as a tRNA-binding adapter to mediate NAT10-dependent tRNA acetylation modifying cytidine to N4-acetylcytidine (ac4C). The protein is THUMP domain-containing protein 1 (THUMPD1) of Bos taurus (Bovine).